Here is an 84-residue protein sequence, read N- to C-terminus: Tripartite terminase subunit 2 (84 aa).

The protein belongs to the herpesviridae TRM2 protein family. As to quaternary structure, associates with TRM1 and TRM3 to form the tripartite terminase complex.

Its subcellular location is the host nucleus. Functionally, component of the molecular motor that translocates viral genomic DNA in empty capsid during DNA packaging. Forms a tripartite terminase complex together with TRM1 and TRM3 in the host cytoplasm. Once the complex reaches the host nucleus, it interacts with the capsid portal vertex. This portal forms a ring in which genomic DNA is translocated into the capsid. This is Tripartite terminase subunit 2 from Alcelaphine herpesvirus 1 (strain C500) (AlHV-1).